Here is a 106-residue protein sequence, read N- to C-terminus: Large ribosomal subunit protein uL24 (106 aa).

Residues 69-106 (SNLNPVDPKTGKATRVGRKVSSEGTLVRYSKKSGEEIK) form a disordered region.

The protein belongs to the universal ribosomal protein uL24 family. In terms of assembly, part of the 50S ribosomal subunit.

In terms of biological role, one of two assembly initiator proteins, it binds directly to the 5'-end of the 23S rRNA, where it nucleates assembly of the 50S subunit. One of the proteins that surrounds the polypeptide exit tunnel on the outside of the subunit. The sequence is that of Large ribosomal subunit protein uL24 from Bacteroides fragilis (strain ATCC 25285 / DSM 2151 / CCUG 4856 / JCM 11019 / LMG 10263 / NCTC 9343 / Onslow / VPI 2553 / EN-2).